The chain runs to 98 residues: Aspartyl/glutamyl-tRNA(Asn/Gln) amidotransferase subunit C (98 aa).

It belongs to the GatC family. In terms of assembly, heterotrimer of A, B and C subunits.

It carries out the reaction L-glutamyl-tRNA(Gln) + L-glutamine + ATP + H2O = L-glutaminyl-tRNA(Gln) + L-glutamate + ADP + phosphate + H(+). The catalysed reaction is L-aspartyl-tRNA(Asn) + L-glutamine + ATP + H2O = L-asparaginyl-tRNA(Asn) + L-glutamate + ADP + phosphate + 2 H(+). Functionally, allows the formation of correctly charged Asn-tRNA(Asn) or Gln-tRNA(Gln) through the transamidation of misacylated Asp-tRNA(Asn) or Glu-tRNA(Gln) in organisms which lack either or both of asparaginyl-tRNA or glutaminyl-tRNA synthetases. The reaction takes place in the presence of glutamine and ATP through an activated phospho-Asp-tRNA(Asn) or phospho-Glu-tRNA(Gln). The protein is Aspartyl/glutamyl-tRNA(Asn/Gln) amidotransferase subunit C of Beutenbergia cavernae (strain ATCC BAA-8 / DSM 12333 / CCUG 43141 / JCM 11478 / NBRC 16432 / NCIMB 13614 / HKI 0122).